A 233-amino-acid polypeptide reads, in one-letter code: MTSTNIDNRVPIEKTIEVIVKNDKGEEVKVIKRYQEYQITVKRNRKVDERKKWKKFGECDNKTGLENTAYGDEQFLVLTRGAEVKEEEKDVVKCRICKKNHFTTKCPYKDALELTTQPQKSEKEEKPISNKYIAPNLRGGYTGSAPSGSDVPSIMVSNLSQNATEKDLYELFGQFGPVSRVSIPKSMEGSSKGFAYVTYNHLDSAEKALKQLNGHRYDYLVLSLEFAKKKSLN.

The 78-residue stretch at 152 to 229 folds into the RRM domain; it reads PSIMVSNLSQ…LVLSLEFAKK (78 aa).

The protein belongs to the eIF-3 subunit G family. Component of the eukaryotic translation initiation factor 3 (eIF-3) complex.

It is found in the cytoplasm. In terms of biological role, RNA-binding component of the eukaryotic translation initiation factor 3 (eIF-3) complex, which is involved in protein synthesis of a specialized repertoire of mRNAs and, together with other initiation factors, stimulates binding of mRNA and methionyl-tRNAi to the 40S ribosome. The eIF-3 complex specifically targets and initiates translation of a subset of mRNAs involved in cell proliferation. This subunit can bind 18S rRNA. This chain is Eukaryotic translation initiation factor 3 subunit G (eif3G), found in Dictyostelium discoideum (Social amoeba).